The primary structure comprises 376 residues: uncharacterized protein (376 aa).

2 helical membrane-spanning segments follow: residues 153–173 and 188–208; these read QGTL…VLFA and HRPF…LAVY.

Its subcellular location is the membrane. This is an uncharacterized protein from Saccharomyces cerevisiae (strain ATCC 204508 / S288c) (Baker's yeast).